A 130-amino-acid chain; its full sequence is Small ribosomal subunit protein uS8 (130 aa).

This sequence belongs to the universal ribosomal protein uS8 family. Part of the 30S ribosomal subunit.

Its function is as follows. One of the primary rRNA binding proteins, it binds directly to 16S rRNA central domain where it helps coordinate assembly of the platform of the 30S subunit. This is Small ribosomal subunit protein uS8 from Methanococcoides burtonii (strain DSM 6242 / NBRC 107633 / OCM 468 / ACE-M).